The chain runs to 628 residues: MFDGYDSCSEDTSSSSSSEESEEEVAPLPSNLPIIKNNGQVYTYPDGKSGMATCEMCGMVGVRDAFYSKTKRFCSVSCSRSYSSNSKKASILARLQGKPPTKKAKVLQKQPLVAKLAAYAQYQATLQNQAKTKAAVSMEGFSWGNYINSNSFIAAPVTCFKHAPMGTCWGDISENVRVEVPNTDCSLPTKVFWIAGIVKLAGYNALLRYEGFENDSGLDFWCNICGSDIHPVGWCAASGKPLVPPRTIQHKYTNWKAFLVKRLTGAKTLPPDFSQKVSESMQYPFKPCMRVEVVDKRHLCRTRVAVVESVIGGRLRLVYEESEDRTDDFWCHMHSPLIHHIGWSRSIGHRFKRSDITKKQDGHFDTPPHLFAKVKEVDQSGEWFKEGMKLEAIDPLNLSTICVATIRKVLADGFLMIGIDGSEAADGSDWFCYHATSPSIFPVGFCEINMIELTPPRGYTKLPFKWFDYLRETGSIAAPVKLFNKDVPNHGFRVGMKLEAVDLMEPRLICVATVTRIIHRLLRIHFDGWEEEYDQWVDCESPDLYPVGWCQLTGYQLQPPASQSSRENQSASSKQKKKAKSQQYKGHKKMTTLQLKEELLDGEDYNFLQGASDQESNGSANFYIKQEP.

The disordered stretch occupies residues 1 to 31 (MFDGYDSCSEDTSSSSSSEESEEEVAPLPSN). An FCS-type zinc finger spans residues 45 to 80 (PDGKSGMATCEMCGMVGVRDAFYSKTKRFCSVSCSR). Residues C54, C57, C74, and C78 each coordinate Zn(2+). Residue K115 is modified to N6-acetyllysine. MBT repeat units follow at residues 141 to 245 (FSWG…LVPP), 253 to 350 (TNWK…IGHR), 351 to 456 (FKRS…LTPP), and 464 to 560 (FKWF…LQPP). 2 disordered regions span residues 560 to 590 (PASQ…HKKM) and 606 to 628 (NFLQ…KQEP). The span at 562 to 573 (SQSSRENQSASS) shows a compositional bias: low complexity. The segment covering 574–590 (KQKKKAKSQQYKGHKKM) has biased composition (basic residues). Residues 609–620 (QGASDQESNGSA) are compositionally biased toward polar residues.

Monomer. Component of the NuA4 histone acetyltransferase complex. Interacts with EPC1; interaction is direct and promotes recruitment of MBTD1 into the NuA4 histone acetyltransferase complex.

The protein resides in the nucleus. It is found in the chromosome. Its function is as follows. Chromatin reader component of the NuA4 histone acetyltransferase complex, a multiprotein complex involved in transcriptional activation of select genes principally by acetylation of nucleosomal histones H4 and H2A. The NuA4 complex plays a direct role in repair of DNA double-strand breaks (DSBs) by promoting homologous recombination (HR). MBTD1 specifically recognizes and binds monomethylated and dimethylated 'Lys-20' on histone H4 (H4K20me1 and H4K20me2, respectively). In the NuA4 complex, MBTD1 promotes recruitment of the complex to H4K20me marks by competing with TP53BP1 for binding to H4K20me. Following recruitment to H4K20me at DNA breaks, the NuA4 complex catalyzes acetylation of 'Lys-15' on histone H2A (H2AK15), blocking the ubiquitination mark required for TP53BP1 localization at DNA breaks, thereby promoting homologous recombination (HR). The sequence is that of MBT domain-containing protein 1 from Homo sapiens (Human).